The following is a 175-amino-acid chain: Crossover junction endodeoxyribonuclease RuvC (175 aa).

Active-site residues include Asp-8, Glu-68, and Asp-140. Residues Asp-8, Glu-68, and Asp-140 each coordinate Mg(2+).

It belongs to the RuvC family. As to quaternary structure, homodimer which binds Holliday junction (HJ) DNA. The HJ becomes 2-fold symmetrical on binding to RuvC with unstacked arms; it has a different conformation from HJ DNA in complex with RuvA. In the full resolvosome a probable DNA-RuvA(4)-RuvB(12)-RuvC(2) complex forms which resolves the HJ. Mg(2+) serves as cofactor.

The protein localises to the cytoplasm. The enzyme catalyses Endonucleolytic cleavage at a junction such as a reciprocal single-stranded crossover between two homologous DNA duplexes (Holliday junction).. The RuvA-RuvB-RuvC complex processes Holliday junction (HJ) DNA during genetic recombination and DNA repair. Endonuclease that resolves HJ intermediates. Cleaves cruciform DNA by making single-stranded nicks across the HJ at symmetrical positions within the homologous arms, yielding a 5'-phosphate and a 3'-hydroxyl group; requires a central core of homology in the junction. The consensus cleavage sequence is 5'-(A/T)TT(C/G)-3'. Cleavage occurs on the 3'-side of the TT dinucleotide at the point of strand exchange. HJ branch migration catalyzed by RuvA-RuvB allows RuvC to scan DNA until it finds its consensus sequence, where it cleaves and resolves the cruciform DNA. This Pseudomonas fluorescens (strain Pf0-1) protein is Crossover junction endodeoxyribonuclease RuvC.